Here is a 345-residue protein sequence, read N- to C-terminus: MTDNKPSLSYKDAGVDIDAGNELVERIKSVSKKTHRPEVRGGLGGFGALCSLPTKYKEPLLVSGTDGVGTKLRLAMDLEQHDGIGIDLVAMCVNDLIVQGAEPLFFLDYYATGKLDVDTAAKVVTGIGKGCELSGCALIGGETAEMPGMYHGNDYDVAGFCVGVVEAADVIDGSRVKAGNVLIALGSSGPHSNGYSLVRKILEVSGCEASEVFDGKPLSEHLLEPTRIYVKSVLHLLESVQVNAITHITGGGFWENIPRVLPQGTKAVIDESSWQWPSIFNWLQENGNVTTHEMYRTFNCGVGLMIALEADKADEAIAILKSQGENVWQIGHIEDSSDNNQVEIK.

The protein belongs to the AIR synthase family.

The protein localises to the cytoplasm. It carries out the reaction 2-formamido-N(1)-(5-O-phospho-beta-D-ribosyl)acetamidine + ATP = 5-amino-1-(5-phospho-beta-D-ribosyl)imidazole + ADP + phosphate + H(+). It participates in purine metabolism; IMP biosynthesis via de novo pathway; 5-amino-1-(5-phospho-D-ribosyl)imidazole from N(2)-formyl-N(1)-(5-phospho-D-ribosyl)glycinamide: step 2/2. This is Phosphoribosylformylglycinamidine cyclo-ligase from Pseudoalteromonas atlantica (strain T6c / ATCC BAA-1087).